The sequence spans 494 residues: Putative NAD kinase 3 (494 aa).

The protein belongs to the NAD kinase family.

The catalysed reaction is NAD(+) + ATP = ADP + NADP(+) + H(+). This chain is Putative NAD kinase 3, found in Oryza sativa subsp. japonica (Rice).